The chain runs to 292 residues: tRNA pseudouridine synthase B (292 aa).

Residue aspartate 40 is the Nucleophile of the active site.

The protein belongs to the pseudouridine synthase TruB family. Type 1 subfamily.

The catalysed reaction is uridine(55) in tRNA = pseudouridine(55) in tRNA. Functionally, responsible for synthesis of pseudouridine from uracil-55 in the psi GC loop of transfer RNAs. This is tRNA pseudouridine synthase B from Mycoplasma mycoides subsp. mycoides SC (strain CCUG 32753 / NCTC 10114 / PG1).